Reading from the N-terminus, the 80-residue chain is Raniseptin-5 (80 aa).

Positions 1–22 (MAFLKKSLFLVLFLGIVSLSIC) are cleaved as a signal peptide. A propeptide spanning residues 23–49 (EEEKREGEEEEKQEEENEELSEEELRE) is cleaved from the precursor.

This sequence belongs to the frog skin active peptide (FSAP) family. Dermaseptin subfamily. As to expression, expressed by the skin glands.

The protein resides in the secreted. In terms of biological role, has antibacterial activity. The sequence is that of Raniseptin-5 from Boana raniceps (Chaco tree frog).